The following is a 673-amino-acid chain: Beta-galactosidase 8 (673 aa).

A signal peptide spans 1-20; that stretch reads MGPSRSFQNLLLLLLPLALA. N-linked (GlcNAc...) asparagine glycosylation occurs at asparagine 38. The active-site Proton donor is glutamate 189. The N-linked (GlcNAc...) asparagine glycan is linked to asparagine 230. The Nucleophile role is filled by glutamate 272. Asparagine 304, asparagine 329, asparagine 401, asparagine 489, and asparagine 540 each carry an N-linked (GlcNAc...) asparagine glycan.

Belongs to the glycosyl hydrolase 35 family.

The protein localises to the secreted. Its subcellular location is the extracellular space. The protein resides in the apoplast. The enzyme catalyses Hydrolysis of terminal non-reducing beta-D-galactose residues in beta-D-galactosides.. This chain is Beta-galactosidase 8, found in Oryza sativa subsp. japonica (Rice).